We begin with the raw amino-acid sequence, 243 residues long: Nuclear protein UL4 homolog (243 aa).

The disordered stretch occupies residues 193 to 226; it reads RPDDQTTPTPTPHQYTSQRRQPETNCPSPQPAFF. Positions 205–219 are enriched in polar residues; it reads HQYTSQRRQPETNCP.

This sequence belongs to the alphaherpesvirinae HHV-1 UL4 family.

Its subcellular location is the host nucleus. The sequence is that of Nuclear protein UL4 homolog from Varicella-zoster virus (strain Oka vaccine) (HHV-3).